The primary structure comprises 489 residues: Probable anthranilate synthase component 1 (489 aa).

L-tryptophan-binding positions include Ser-54 and 262–264 (PYM). 297–298 (GT) provides a ligand contact to chorismate. Residue Glu-324 coordinates Mg(2+). Residues Ser-390 and Ser-392 each carry the phosphoserine modification. Residues Tyr-412, Arg-433, 447-449 (GGG), and Gly-449 each bind chorismate. Glu-462 contributes to the Mg(2+) binding site. Ser-488 is subject to Phosphoserine.

Belongs to the anthranilate synthase component I family. As to quaternary structure, tetramer of two components I and two components II. The cofactor is Mg(2+).

The enzyme catalyses chorismate + L-glutamine = anthranilate + pyruvate + L-glutamate + H(+). It participates in amino-acid biosynthesis; L-tryptophan biosynthesis; L-tryptophan from chorismate: step 1/5. This is Probable anthranilate synthase component 1 (trp3) from Schizosaccharomyces pombe (strain 972 / ATCC 24843) (Fission yeast).